Here is a 230-residue protein sequence, read N- to C-terminus: ATP synthase subunit a (230 aa).

The next 6 membrane-spanning stretches (helical) occupy residues 26 to 46 (ANAV…SLIA), 83 to 103 (FFPL…VGLI), 112 to 132 (NVNT…VVGI), 143 to 163 (FMGP…IGHL), 182 to 202 (LVLM…MMLM), and 203 to 223 (GVLV…IYIQ).

Belongs to the ATPase A chain family. In terms of assembly, F-type ATPases have 2 components, CF(1) - the catalytic core - and CF(0) - the membrane proton channel. CF(1) has five subunits: alpha(3), beta(3), gamma(1), delta(1), epsilon(1). CF(0) has three main subunits: a(1), b(2) and c(9-12). The alpha and beta chains form an alternating ring which encloses part of the gamma chain. CF(1) is attached to CF(0) by a central stalk formed by the gamma and epsilon chains, while a peripheral stalk is formed by the delta and b chains.

The protein resides in the cell inner membrane. Functionally, key component of the proton channel; it plays a direct role in the translocation of protons across the membrane. This is ATP synthase subunit a from Trichlorobacter lovleyi (strain ATCC BAA-1151 / DSM 17278 / SZ) (Geobacter lovleyi).